The sequence spans 508 residues: Pyruvate kinase (508 aa).

R56 lines the substrate pocket. The K(+) site is built by N58, S60, D90, and T91. ATP is bound at residue 58 to 61 (NFSH). 2 residues coordinate ATP: R97 and K185. E251 is a Mg(2+) binding site. Residues G274, D275, and T307 each contribute to the substrate site. D275 contributes to the Mg(2+) binding site.

This sequence belongs to the pyruvate kinase family. As to quaternary structure, homotetramer. Mg(2+) is required as a cofactor. Requires K(+) as cofactor.

It catalyses the reaction pyruvate + ATP = phosphoenolpyruvate + ADP + H(+). It participates in carbohydrate degradation; glycolysis; pyruvate from D-glyceraldehyde 3-phosphate: step 5/5. Its activity is regulated as follows. Regulated by phosphoenolpyruvate substrate and is allosterically activated by ribose-5-phosphate, AMP and other nucleoside monophosphates but not by fructose-1,6-bisphosphate. This chain is Pyruvate kinase (pyk), found in Mycoplasma pneumoniae (strain ATCC 29342 / M129 / Subtype 1) (Mycoplasmoides pneumoniae).